A 217-amino-acid polypeptide reads, in one-letter code: tRNA (guanine-N(7)-)-methyltransferase (217 aa).

Residues glutamate 44, glutamate 69, aspartate 96, and aspartate 118 each coordinate S-adenosyl-L-methionine. Residue aspartate 118 is part of the active site. Substrate contacts are provided by residues lysine 122, aspartate 154, and 191 to 194 (TEYE).

This sequence belongs to the class I-like SAM-binding methyltransferase superfamily. TrmB family.

The enzyme catalyses guanosine(46) in tRNA + S-adenosyl-L-methionine = N(7)-methylguanosine(46) in tRNA + S-adenosyl-L-homocysteine. The protein operates within tRNA modification; N(7)-methylguanine-tRNA biosynthesis. Its function is as follows. Catalyzes the formation of N(7)-methylguanine at position 46 (m7G46) in tRNA. The polypeptide is tRNA (guanine-N(7)-)-methyltransferase (Bacillus thuringiensis (strain Al Hakam)).